The following is a 942-amino-acid chain: Serine/threonine-protein kinase ATG1 (942 aa).

Residues 11 to 312 (YVVEKEIGKG…FEEFFNNKIV (302 aa)) form the Protein kinase domain. Residues 17-25 (IGKGSFATV) and K41 each bind ATP. Catalysis depends on D159, which acts as the Proton acceptor. Polar residues predominate over residues 435–452 (NSSRVNKLDKSNLSGKSD). 3 disordered regions span residues 435 to 454 (NSSR…SDSS), 505 to 529 (QPHN…SRRA), and 817 to 836 (NSKP…NDSN). Over residues 515 to 529 (RAPSTTSGGTSSRRA) the composition is skewed to low complexity. A compositionally biased stretch (polar residues) spans 819–834 (KPGTHNQSPKSKISND).

This sequence belongs to the protein kinase superfamily. Ser/Thr protein kinase family. APG1/unc-51/ULK1 subfamily. As to quaternary structure, homodimer. Forms a ternary complex with ATG13 and ATG17.

It localises to the cytoplasm. It is found in the preautophagosomal structure membrane. The enzyme catalyses L-seryl-[protein] + ATP = O-phospho-L-seryl-[protein] + ADP + H(+). The catalysed reaction is L-threonyl-[protein] + ATP = O-phospho-L-threonyl-[protein] + ADP + H(+). Serine/threonine protein kinase involved in the cytoplasm to vacuole transport (Cvt) and found to be essential in autophagy, where it is required for the formation of autophagosomes. Involved in the clearance of protein aggregates which cannot be efficiently cleared by the proteasome. Required for selective autophagic degradation of the nucleus (nucleophagy) as well as for mitophagy which contributes to regulate mitochondrial quantity and quality by eliminating the mitochondria to a basal level to fulfill cellular energy requirements and preventing excess ROS production. Also involved in endoplasmic reticulum-specific autophagic process, in selective removal of ER-associated degradation (ERAD) substrates. Plays a key role in ATG9 and ATG23 cycling through the pre-autophagosomal structure and is necessary to promote ATG18 binding to ATG9 through phosphorylation of ATG9. Catalyzes phosphorylation of ATG4, decreasing the interaction between ATG4 and ATG8 and impairing deconjugation of PE-conjugated forms of ATG8. Contributes to virulence by conferring resistance to unstable nutrient environments and immune defense of hosts. This is Serine/threonine-protein kinase ATG1 from Candida glabrata (strain ATCC 2001 / BCRC 20586 / JCM 3761 / NBRC 0622 / NRRL Y-65 / CBS 138) (Yeast).